Here is a 1132-residue protein sequence, read N- to C-terminus: Myosin-binding protein C, fast-type (1132 aa).

The segment at 1–59 (MPEPSKAAPKKEAKKKEEKKEEKKEAPPPQEHKDEAPDDVHPPETPDPEGLFLSKPQNV) is disordered. A compositionally biased stretch (basic and acidic residues) spans 9 to 44 (PKKEAKKKEEKKEEKKEAPPPQEHKDEAPDDVHPPE). Ig-like C2-type domains are found at residues 48–149 (PEGL…SIDV), 249–338 (SEAF…VKEP), 339–429 (PVTV…VEEK), 430–530 (QLEV…KQEP), and 531–630 (PKIH…VVDV). Fibronectin type-III domains follow at residues 633–729 (PPQS…IAPT) and 731–826 (EPTH…IREI). Residues 830–923 (PKIRLPRHLR…ATLRLRVVER (94 aa)) form the Ig-like C2-type 6 domain. The region spanning 926 to 1022 (PPQAVRVMEV…HNTARIAKEG (97 aa)) is the Fibronectin type-III 3 domain. Residues 1039–1132 (PQFLTPLVDR…ECRLDVRVPQ (94 aa)) form the Ig-like C2-type 7 domain.

It belongs to the immunoglobulin superfamily. MyBP family.

Thick filament-associated protein located in the crossbridge region of vertebrate striated muscle a bands. In vitro it binds MHC, F-actin and native thin filaments, and modifies the activity of actin-activated myosin ATPase. It may modulate muscle contraction or may play a more structural role. This is Myosin-binding protein C, fast-type (MYBPC2) from Gallus gallus (Chicken).